A 262-amino-acid chain; its full sequence is Acyl-[acyl-carrier-protein]--UDP-N-acetylglucosamine O-acyltransferase (262 aa).

The protein belongs to the transferase hexapeptide repeat family. LpxA subfamily. Homotrimer.

It is found in the cytoplasm. It catalyses the reaction a (3R)-hydroxyacyl-[ACP] + UDP-N-acetyl-alpha-D-glucosamine = a UDP-3-O-[(3R)-3-hydroxyacyl]-N-acetyl-alpha-D-glucosamine + holo-[ACP]. The protein operates within glycolipid biosynthesis; lipid IV(A) biosynthesis; lipid IV(A) from (3R)-3-hydroxytetradecanoyl-[acyl-carrier-protein] and UDP-N-acetyl-alpha-D-glucosamine: step 1/6. Functionally, involved in the biosynthesis of lipid A, a phosphorylated glycolipid that anchors the lipopolysaccharide to the outer membrane of the cell. This chain is Acyl-[acyl-carrier-protein]--UDP-N-acetylglucosamine O-acyltransferase, found in Cronobacter sakazakii (strain ATCC BAA-894) (Enterobacter sakazakii).